Here is a 395-residue protein sequence, read N- to C-terminus: Probable isocitrate dehydrogenase [NAD] gamma 2, mitochondrial (395 aa).

The N-terminal 25 residues, Met1–Val25, are a transit peptide targeting the mitochondrion. Thr117 serves as a coordination point for citrate. Substrate is bound by residues Arg133, Arg164, and Asp251. Position 251 (Asp251) interacts with Mn(2+). ADP is bound at residue Asn321.

The protein belongs to the isocitrate and isopropylmalate dehydrogenases family. As to quaternary structure, heterooligomer of subunits alpha (IDH3A), beta (IDH3B), and gamma (IDH3G) in the apparent ratio of 2:1:1. The heterodimer containing one IDH3A and one IDH3B subunit and the heterodimer containing one IDH3A and one IDH3G subunit assemble into a heterotetramer (which contains two subunits of IDH3A, one of IDH3B and one of IDH3G) and further into the heterooctamer. Mg(2+) is required as a cofactor. Requires Mn(2+) as cofactor.

Its subcellular location is the mitochondrion. Its activity is regulated as follows. The heterotetramer and the heterodimer composed of IDH3A and IDH3G subunits can be allosterically activated by citrate (CIT) or/and ADP, and the two activators can act independently or synergistically. The heterodimer composed of IDH3A and IDH3B subunits cannot be allosterically regulated and the allosteric regulation of the heterotetramer is through the IDH3G subunit and not the IDH3B subunit. The IDH3G subunit contains the allosteric site which consists of a CIT-binding site and an ADP-binding site, and the binding of CIT and ADP causes conformational changes at the allosteric site which are transmitted to the active site in the catalytic subunit (IDH3A) through a cascade of conformational changes at the heterodimer interface, leading to stabilization of the isocitrate-binding at the active site and thus activation of the enzyme. ATP can activate the heterotetramer and the heterodimer composed of IDH3A and IDH3G subunits at low concentrations but inhibits their activities at high concentrations, whereas ATP exhibits only inhibitory effect on the heterodimer composed of IDH3A and IDH3B subunits. Functionally, regulatory subunit which plays a role in the allosteric regulation of the enzyme catalyzing the decarboxylation of isocitrate (ICT) into alpha-ketoglutarate. The heterodimer composed of the alpha (IDH3A) and beta (IDH3B) subunits and the heterodimer composed of the alpha (IDH3A) and gamma (IDH3G) subunits, have considerable basal activity but the full activity of the heterotetramer (containing two subunits of IDH3A, one of IDH3B and one of IDH3G) requires the assembly and cooperative function of both heterodimers. The sequence is that of Probable isocitrate dehydrogenase [NAD] gamma 2, mitochondrial from Rattus norvegicus (Rat).